A 404-amino-acid polypeptide reads, in one-letter code: Pyruvate-flavodoxin oxidoreductase (404 aa).

This sequence belongs to the pyruvate:ferredoxin/flavodoxin oxidoreductase family.

The enzyme catalyses oxidized [flavodoxin] + pyruvate + CoA + 2 H(+) = reduced [flavodoxin] + acetyl-CoA + CO2. Oxidoreductase required for the transfer of electrons from pyruvate to flavodoxin, which reduces nitrogenase. This is Pyruvate-flavodoxin oxidoreductase (nifJ) from Nostoc sp. (strain ATCC 29151 / PCC 7119) (Anabaena sp.).